We begin with the raw amino-acid sequence, 231 residues long: Probable intron-encoded endonuclease 1 (231 aa).

It belongs to the LAGLIDADG endonuclease family.

Its subcellular location is the mitochondrion. Its function is as follows. Endonuclease involved in mitochondrial 21S rRNA gene intron homing. This is Probable intron-encoded endonuclease 1 from Wickerhamomyces canadensis (Yeast).